The sequence spans 493 residues: MAVFGVTIALLVWVATLLIVSIWKQIYSSWNLPPGPFPLPILGNIFQLDLKNIPKSLTKLAERFGPVFTLHLGSKRIVVLHGYKAVKEVLLNHKNEFSGRGDIPVFQEYMNKGIIFNNGPTWKDVRRFSLSILRDYGMGKQGNEARIQREAHFLMEELKKTNGQPFDPTFLVGCAPFNVISDILFHKRFDYNDKTCLRLMSLFNENFYLLSTPWIQAYNNFENYLRYLPGSHRKIMKNASEIRQYTLAKAKEHLQSLDSSCPRDVTDCLLIEMEKEKDSQEPMYTMENISVTLADLFFAGTETTSTTLRYGLLILMKYPEVEEKLHEEIDRVIGPSRVPVFKDRLEMPYMDAVVHEIQRFISLIPSNLPHEATRDTMFRGYVIPKGTVVIPTLDSLLYDSQEFPDPEKFKPEHFLNENGKFKYSDHFKAFSAGKRVCVGEGLARMELFLLLTAILQHFNLKSLVDPKDIDLNPVTIGFGCVPPEFKLCVIPRS.

298–303 provides a ligand contact to substrate; it reads FAGTET. Residue Cys437 participates in heme binding.

The protein belongs to the cytochrome P450 family. As to quaternary structure, interacts with chaperones HSP70 and HSP90; this interaction is required for initial targeting to mitochondria. The cofactor is heme.

It is found in the endoplasmic reticulum membrane. The protein localises to the microsome membrane. Its subcellular location is the mitochondrion inner membrane. The catalysed reaction is an organic molecule + reduced [NADPH--hemoprotein reductase] + O2 = an alcohol + oxidized [NADPH--hemoprotein reductase] + H2O + H(+). It carries out the reaction (5Z,8Z,11Z)-eicosatrienoate + reduced [NADPH--hemoprotein reductase] + O2 = 19-hydroxy-(5Z,8Z,11Z)-eicosatrienoate + oxidized [NADPH--hemoprotein reductase] + H2O + H(+). The enzyme catalyses (5Z,8Z,11Z,14Z,17Z)-eicosapentaenoate + reduced [NADPH--hemoprotein reductase] + O2 = 19-hydroxy-(5Z,8Z,11Z,14Z,17Z)-eicosapentaenoate + oxidized [NADPH--hemoprotein reductase] + H2O + H(+). It catalyses the reaction (4Z,7Z,10Z,13Z,16Z,19Z)-docosahexaenoate + reduced [NADPH--hemoprotein reductase] + O2 = 21-hydroxy-(4Z,7Z,10Z,13Z,16Z,19Z)-docosahexaenoate + oxidized [NADPH--hemoprotein reductase] + H2O + H(+). The catalysed reaction is dodecanoate + reduced [NADPH--hemoprotein reductase] + O2 = 11-hydroxydodecanoate + oxidized [NADPH--hemoprotein reductase] + H2O + H(+). It carries out the reaction tetradecanoate + reduced [NADPH--hemoprotein reductase] + O2 = 13-hydroxytetradecanoate + oxidized [NADPH--hemoprotein reductase] + H2O + H(+). The enzyme catalyses 4-nitrophenol + NADPH + O2 + H(+) = 4-nitrocatechol + NADP(+) + H2O. It functions in the pathway lipid metabolism; fatty acid metabolism. Its activity is regulated as follows. The omega-1 hydroxylase activity is stimulated by cytochrome b5. A cytochrome P450 monooxygenase involved in the metabolism of fatty acids. Mechanistically, uses molecular oxygen inserting one oxygen atom into a substrate, and reducing the second into a water molecule, with two electrons provided by NADPH via cytochrome P450 reductase (NADPH--hemoprotein reductase). Catalyzes the hydroxylation of carbon-hydrogen bonds. Hydroxylates fatty acids specifically at the omega-1 position displaying the highest catalytic activity for saturated fatty acids. May be involved in the oxidative metabolism of xenobiotics. In Mesocricetus auratus (Golden hamster), this protein is Cytochrome P450 2E1 (CYP2E1).